The following is a 149-amino-acid chain: Small ribosomal subunit protein bS18c (149 aa).

The interval 1–23 is disordered; the sequence is MDKITGPFRKSKKSFRKPLPPIQ.

It belongs to the bacterial ribosomal protein bS18 family. In terms of assembly, part of the 30S ribosomal subunit.

It localises to the plastid. This Cuscuta obtusiflora (Peruvian dodder) protein is Small ribosomal subunit protein bS18c.